A 3674-amino-acid chain; its full sequence is Dystrophin-1 (3674 aa).

A disordered region spans residues 1-25; it reads MLFSGASTAKPKKDEKKDKKSDRDP. Residues 11-25 show a composition bias toward basic and acidic residues; sequence PKKDEKKDKKSDRDP. The segment at 30–39 is actin-binding; the sequence is QEWVFVRWAN. The Calponin-homology (CH) domain occupies 129-234; the sequence is EKLSEAIKQW…YLMSLYLAMI (106 aa). Residues 265-325 form a disordered region; the sequence is SQPSTSSSSA…KSGKSKKARR (61 aa). Spectrin repeat units follow at residues 327-435, 436-541, and 612-656; these read EQLA…VLQQ, QIHL…KLDG, and CELV…TLVK. Over residues 655–674 the composition is skewed to basic and acidic residues; sequence VKSGKADVKQVQESQNEQKE. 5 disordered regions span residues 655–689, 968–991, 1587–1606, 1796–1833, and 2387–2466; these read VKSGKADVKQVQESQNEQKEQPASSEGLSTDTEGE, NSQMSNETVEKAETRKAEMEEKRR, ASAEKAPAPELRDARLSSPS, LSATEKKPVETVKSTIPDRPEVPEEPEKSSPDRTSRSS, and MNDS…GSTG. Residues 675–685 show a composition bias toward polar residues; that stretch reads QPASSEGLSTD. The span at 975-991 shows a compositional bias: basic and acidic residues; sequence TVEKAETRKAEMEEKRR. The segment covering 1796–1830 has biased composition (basic and acidic residues); it reads LSATEKKPVETVKSTIPDRPEVPEEPEKSSPDRTS. Residues 2391–2411 are compositionally biased toward polar residues; it reads GGDTTESRSTVVEMTSVHTKQ. Spectrin repeat units follow at residues 2576–2673, 2725–2789, 2792–2905, and 2926–3032; these read RNEM…VLEA, FKTL…RLEK, QEWE…RLKK, and QRLQ…AVRN. The WW domain occupies 3047–3081; that stretch reads QSVTLPWQRAISKSNLLPYYIEQTSEKTQWEHPVW. A ZZ-type zinc finger spans residues 3301 to 3357; sequence KHASKCNVCKMFPIIGIRYRCLTCFNCDLCQNCFFSQRTAKSHRTNHPMQEYCEKTT. Zn(2+)-binding residues include Cys-3306, Cys-3309, Cys-3321, Cys-3324, Cys-3330, Cys-3333, His-3343, and His-3347. Disordered regions lie at residues 3481 to 3522 and 3568 to 3645; these read STME…TQSQ and KQQA…QMQN. Residues 3568–3579 show a composition bias toward polar residues; it reads KQQAPLSTNSLL.

As to quaternary structure, component of the dystrophin glycoprotein complex (DGC). Interacts with dyb-1 and stn-1 to form the DGC. Interacts with stn-2. Expressed in body wall, head, pharyngeal and vulval muscles, from late embryogenesis to adulthood (at protein level).

Its subcellular location is the cell membrane. It is found in the sarcolemma. The protein resides in the cytoplasm. It localises to the cytoskeleton. Plays a role in cholinergic transmission and as a functional partner of dystrobrevin (dyb-1), necessary for muscle maintenance. Required for neuronal positioning. May play a role in the localization of slo-1 near dense bodies in the muscle. This is Dystrophin-1 (dys-1) from Caenorhabditis elegans.